We begin with the raw amino-acid sequence, 392 residues long: Branched-chain-amino-acid aminotransferase, mitochondrial (392 aa).

The transit peptide at 1–27 (MAAAALGQIWARKFLSVPWLLCGPRRY) directs the protein to the mitochondrion. Y168 is a binding site for substrate. At K229 the chain carries N6-(pyridoxal phosphate)lysine. K321 carries the N6-acetyllysine modification.

This sequence belongs to the class-IV pyridoxal-phosphate-dependent aminotransferase family. Homodimer. Pyridoxal 5'-phosphate is required as a cofactor.

Its subcellular location is the mitochondrion. The catalysed reaction is L-leucine + 2-oxoglutarate = 4-methyl-2-oxopentanoate + L-glutamate. It catalyses the reaction L-isoleucine + 2-oxoglutarate = (S)-3-methyl-2-oxopentanoate + L-glutamate. It carries out the reaction L-valine + 2-oxoglutarate = 3-methyl-2-oxobutanoate + L-glutamate. Its function is as follows. Catalyzes the first reaction in the catabolism of the essential branched chain amino acids leucine, isoleucine, and valine. May also function as a transporter of branched chain alpha-keto acids. The chain is Branched-chain-amino-acid aminotransferase, mitochondrial (BCAT2) from Pongo abelii (Sumatran orangutan).